Here is a 108-residue protein sequence, read N- to C-terminus: V-type proton ATPase subunit G (108 aa).

Basic and acidic residues predominate over residues 48–60 (YASKKEEEFKKSE). Residues 48–89 (YASKKEEEFKKSESQASGIYSQAEAESKKQVQDTFASIETSS) form a disordered region. Over residues 79–89 (QDTFASIETSS) the composition is skewed to polar residues.

This sequence belongs to the V-ATPase G subunit family. As to quaternary structure, V-ATPase is a heteromultimeric enzyme composed of a peripheral catalytic V1 complex (components A to H) attached to an integral membrane V0 proton pore complex (components: a, c, c', c'', d, e, f and VOA1).

The protein localises to the vacuole membrane. Its function is as follows. Subunit of the V1 complex of vacuolar(H+)-ATPase (V-ATPase), a multisubunit enzyme composed of a peripheral complex (V1) that hydrolyzes ATP and a membrane integral complex (V0) that translocates protons. V-ATPase is responsible for acidifying and maintaining the pH of intracellular compartments. The chain is V-type proton ATPase subunit G (vma10) from Schizosaccharomyces pombe (strain 972 / ATCC 24843) (Fission yeast).